The chain runs to 225 residues: Cell division protein SepF (225 aa).

The interval Asp21–Leu134 is disordered. Basic and acidic residues-rich tracts occupy residues Glu28 to Ala54, Arg77 to Arg86, and Thr115 to Leu127.

This sequence belongs to the SepF family. As to quaternary structure, homodimer. Interacts with FtsZ.

It is found in the cytoplasm. Functionally, cell division protein that is part of the divisome complex and is recruited early to the Z-ring. Probably stimulates Z-ring formation, perhaps through the cross-linking of FtsZ protofilaments. Its function overlaps with FtsA. This Rhodococcus opacus (strain B4) protein is Cell division protein SepF.